The following is a 480-amino-acid chain: Acetyl-coenzyme A carboxylase carboxyl transferase subunit beta, chloroplastic (480 aa).

The disordered stretch occupies residues 25–48 (TSSLGPIENASESKDPNINDTDKN). Residues 35–47 (SESKDPNINDTDK) show a composition bias toward basic and acidic residues. The region spanning 216–480 (LWVQCENCYG…LHTFFPLNQN (265 aa)) is the CoA carboxyltransferase N-terminal domain. Zn(2+)-binding residues include C220, C223, C239, and C242. The segment at 220–242 (CENCYGLNYKKFFKSKMNLCEQC) adopts a C4-type zinc-finger fold.

It belongs to the AccD/PCCB family. As to quaternary structure, acetyl-CoA carboxylase is a heterohexamer composed of biotin carboxyl carrier protein, biotin carboxylase and 2 subunits each of ACCase subunit alpha and ACCase plastid-coded subunit beta (accD). It depends on Zn(2+) as a cofactor.

The protein resides in the plastid. It localises to the chloroplast stroma. It carries out the reaction N(6)-carboxybiotinyl-L-lysyl-[protein] + acetyl-CoA = N(6)-biotinyl-L-lysyl-[protein] + malonyl-CoA. It participates in lipid metabolism; malonyl-CoA biosynthesis; malonyl-CoA from acetyl-CoA: step 1/1. In terms of biological role, component of the acetyl coenzyme A carboxylase (ACC) complex. Biotin carboxylase (BC) catalyzes the carboxylation of biotin on its carrier protein (BCCP) and then the CO(2) group is transferred by the transcarboxylase to acetyl-CoA to form malonyl-CoA. This Helianthus annuus (Common sunflower) protein is Acetyl-coenzyme A carboxylase carboxyl transferase subunit beta, chloroplastic.